A 282-amino-acid polypeptide reads, in one-letter code: Pantothenate synthetase (282 aa).

Position 30–37 (30–37 (MGYLHEGH)) interacts with ATP. The Proton donor role is filled by His37. Residue Gln61 coordinates (R)-pantoate. Gln61 contributes to the beta-alanine binding site. An ATP-binding site is contributed by 148–151 (GQKD). Residue Gln154 participates in (R)-pantoate binding. ATP is bound by residues Val177 and 185 to 188 (MSSR).

This sequence belongs to the pantothenate synthetase family. As to quaternary structure, homodimer.

It localises to the cytoplasm. It carries out the reaction (R)-pantoate + beta-alanine + ATP = (R)-pantothenate + AMP + diphosphate + H(+). Its pathway is cofactor biosynthesis; (R)-pantothenate biosynthesis; (R)-pantothenate from (R)-pantoate and beta-alanine: step 1/1. Its function is as follows. Catalyzes the condensation of pantoate with beta-alanine in an ATP-dependent reaction via a pantoyl-adenylate intermediate. This chain is Pantothenate synthetase, found in Syntrophomonas wolfei subsp. wolfei (strain DSM 2245B / Goettingen).